Consider the following 260-residue polypeptide: Imidazole glycerol phosphate synthase subunit HisF (260 aa).

Active-site residues include Asp-11 and Asp-130.

Belongs to the HisA/HisF family. Heterodimer of HisH and HisF.

Its subcellular location is the cytoplasm. The catalysed reaction is 5-[(5-phospho-1-deoxy-D-ribulos-1-ylimino)methylamino]-1-(5-phospho-beta-D-ribosyl)imidazole-4-carboxamide + L-glutamine = D-erythro-1-(imidazol-4-yl)glycerol 3-phosphate + 5-amino-1-(5-phospho-beta-D-ribosyl)imidazole-4-carboxamide + L-glutamate + H(+). The protein operates within amino-acid biosynthesis; L-histidine biosynthesis; L-histidine from 5-phospho-alpha-D-ribose 1-diphosphate: step 5/9. IGPS catalyzes the conversion of PRFAR and glutamine to IGP, AICAR and glutamate. The HisF subunit catalyzes the cyclization activity that produces IGP and AICAR from PRFAR using the ammonia provided by the HisH subunit. This Caulobacter sp. (strain K31) protein is Imidazole glycerol phosphate synthase subunit HisF.